The following is a 196-amino-acid chain: MTVGVLALQGAFREHRQRLEQLGAGVREVRLPADLAGLSGLILPGGESTTMVRLLTEGGLWHPLRDFHAAGGALWGTCAGAIVLAREVMGGSPSLPPQPGLGLLDITVQRNAFGRQVDSFTAPLDIAGLDAPFPAVFIRAPVITRVGPAARALATLGDRTAHVQQGRVLASAFHPELTEDTRLHRVFLGLAGERAY.

An L-glutamine-binding site is contributed by 46–48; it reads GES. Cysteine 78 (nucleophile) is an active-site residue. L-glutamine contacts are provided by residues arginine 110 and 138–139; that span reads IR. Active-site charge relay system residues include histidine 174 and glutamate 176.

It belongs to the glutaminase PdxT/SNO family. In terms of assembly, in the presence of PdxS, forms a dodecamer of heterodimers. Only shows activity in the heterodimer.

The catalysed reaction is aldehydo-D-ribose 5-phosphate + D-glyceraldehyde 3-phosphate + L-glutamine = pyridoxal 5'-phosphate + L-glutamate + phosphate + 3 H2O + H(+). It catalyses the reaction L-glutamine + H2O = L-glutamate + NH4(+). It participates in cofactor biosynthesis; pyridoxal 5'-phosphate biosynthesis. In terms of biological role, catalyzes the hydrolysis of glutamine to glutamate and ammonia as part of the biosynthesis of pyridoxal 5'-phosphate. The resulting ammonia molecule is channeled to the active site of PdxS. The polypeptide is Pyridoxal 5'-phosphate synthase subunit PdxT (Deinococcus radiodurans (strain ATCC 13939 / DSM 20539 / JCM 16871 / CCUG 27074 / LMG 4051 / NBRC 15346 / NCIMB 9279 / VKM B-1422 / R1)).